The following is a 219-amino-acid chain: Charged multivesicular body protein 5 (219 aa).

A compositionally biased stretch (basic residues) spans 1-10 (MNRFFGKAKP). Residues 1-21 (MNRFFGKAKPKAPPPSLTDCI) are disordered. Residues 26-179 (SRAESIDKKI…LGDELLADED (154 aa)) adopt a coiled-coil conformation. The residue at position 86 (S86) is a Phosphoserine. The disordered stretch occupies residues 188–219 (SAPAIPEGVPTDTKNKDGVLVDEFGLPQIPAS).

It belongs to the SNF7 family. As to quaternary structure, probable peripherally associated component of the endosomal sorting required for transport complex III (ESCRT-III). ESCRT-III components are thought to multimerize to form a flat lattice on the perimeter membrane of the endosome. Several assembly forms of ESCRT-III may exist that interact and act sequentially. Interacts with VTA1. Interacts with CHMP2A. Interacts with VTA1; the interaction involves soluble CHMP5. Interacts with NOD2. Interacts with BROX. In terms of processing, ISGylated. Isgylation inhibits its interaction with VTA1.

It localises to the cytoplasm. Its subcellular location is the cytosol. It is found in the endosome membrane. The protein localises to the midbody. In terms of biological role, probable peripherally associated component of the endosomal sorting required for transport complex III (ESCRT-III) which is involved in multivesicular bodies (MVBs) formation and sorting of endosomal cargo proteins into MVBs. MVBs contain intraluminal vesicles (ILVs) that are generated by invagination and scission from the limiting membrane of the endosome and mostly are delivered to lysosomes enabling degradation of membrane proteins, such as stimulated growth factor receptors, lysosomal enzymes and lipids. The MVB pathway appears to require the sequential function of ESCRT-O, -I,-II and -III complexes. ESCRT-III proteins mostly dissociate from the invaginating membrane before the ILV is released. The ESCRT machinery also functions in topologically equivalent membrane fission events, such as the terminal stages of cytokinesis. ESCRT-III proteins are believed to mediate the necessary vesicle extrusion and/or membrane fission activities, possibly in conjunction with the AAA ATPase VPS4. The chain is Charged multivesicular body protein 5 (Chmp5) from Mus musculus (Mouse).